We begin with the raw amino-acid sequence, 506 residues long: Protein MGF 505-4R (506 aa).

It belongs to the asfivirus MGF 505 family.

Plays a role in virus cell tropism, and may be required for efficient virus replication in macrophages. This chain is Protein MGF 505-4R, found in Ornithodoros (relapsing fever ticks).